The following is a 203-amino-acid chain: A-type ATP synthase subunit E (203 aa).

The protein belongs to the V-ATPase E subunit family. As to quaternary structure, has multiple subunits with at least A(3), B(3), C, D, E, F, H, I and proteolipid K(x).

The protein localises to the cell membrane. Component of the A-type ATP synthase that produces ATP from ADP in the presence of a proton gradient across the membrane. The chain is A-type ATP synthase subunit E from Desulfurococcus sp. (strain SY).